The sequence spans 217 residues: UPF0502 protein PFLU_2135 (217 aa).

It belongs to the UPF0502 family.

This Pseudomonas fluorescens (strain SBW25) protein is UPF0502 protein PFLU_2135.